The following is a 274-amino-acid chain: Envelope glycoprotein L (274 aa).

The first 21 residues, Met1 to Ser21, serve as a signal peptide directing secretion. A gL betaherpesvirus-type domain is found at Val51 to Val251. Cysteines 156 and 161 form a disulfide.

Belongs to the herpesviridae glycoprotein L (gL) family. Betaherpesvirinae gL subfamily. As to quaternary structure, interacts with glycoprotein H (gH); this interaction is necessary for the correct processing and cell surface expression of gH.

Its subcellular location is the virion membrane. It localises to the host cell membrane. It is found in the host Golgi apparatus. The protein localises to the host trans-Golgi network. In terms of biological role, the heterodimer glycoprotein H-glycoprotein L is required for the fusion of viral and plasma membranes leading to virus entry into the host cell. Acts as a functional inhibitor of gH and maintains gH in an inhibited form. Upon binding to host integrins, gL dissociates from gH leading to activation of the viral fusion glycoproteins gB and gH. The protein is Envelope glycoprotein L of Murid herpesvirus 1 (strain Smith) (MuHV-1).